Here is a 111-residue protein sequence, read N- to C-terminus: Microtubule nucleation factor SSNA1 (111 aa).

Residues 6-71 are a coiled coil; it reads QALQNHNNEL…ARKTETKNEY (66 aa).

This sequence belongs to the SSNA1 family. Self-assembles into fibrils in a head-to-tail fashion.

Its subcellular location is the cytoplasm. The protein localises to the cytoskeleton. It is found in the flagellum basal body. It localises to the flagellum axoneme. Its function is as follows. Microtubule-binding protein which stabilizes dynamic microtubules by slowing growth and shrinkage at both plus and minus ends and serves as a sensor of microtubule damage. Induces microtubule branching which is mediated by the formation of long SSNA1 fibrils which guide microtubule protofilaments to split apart from the mother microtubule and form daughter microtubules. Required for cell division. This chain is Microtubule nucleation factor SSNA1, found in Chlamydomonas reinhardtii (Chlamydomonas smithii).